Consider the following 213-residue polypeptide: MSAFIYNNSNNNNSMRLCVMGDGGVGKTSITIQFISNHFVNCYDPTIEDLYRKQCLIDDQVYMLDILDTAGQDELNAIRNHWIKSCEGFILVYSVTSRSSFDQIQSFLDQIKFLKSEKVPIIMIANKSDLDDERQVTYQEGENFANRFGMSFMEVSAKYKLNIDEVFNQIAQHCVKRRCDHIYINKSIRNKNSIFKKFNQKLNNTFHSICKMI.

21-28 provides a ligand contact to GTP; the sequence is GDGGVGKT. The short motif at 43–51 is the Effector region element; sequence YDPTIEDLY. GTP contacts are provided by residues 68–72 and 126–129; these read DTAGQ and NKSD. Residue Cys210 is modified to Cysteine methyl ester. A lipid anchor (S-geranylgeranyl cysteine) is attached at Cys210. Residues 211-213 constitute a propeptide, removed in mature form; that stretch reads KMI.

It belongs to the small GTPase superfamily. Ras family.

Its subcellular location is the cell membrane. The enzyme catalyses GTP + H2O = GDP + phosphate + H(+). Functionally, ras proteins bind GDP/GTP and possess intrinsic GTPase activity. The polypeptide is Ras-like protein rasU (rasU) (Dictyostelium discoideum (Social amoeba)).